The primary structure comprises 252 residues: 3-dehydroquinate dehydratase (252 aa).

3-dehydroquinate contacts are provided by residues 47 to 49 (EWR) and Arg83. His144 serves as the catalytic Proton donor/acceptor. Lys171 serves as the catalytic Schiff-base intermediate with substrate. Arg213, Ser232, and Gln236 together coordinate 3-dehydroquinate.

This sequence belongs to the type-I 3-dehydroquinase family. In terms of assembly, homodimer.

It catalyses the reaction 3-dehydroquinate = 3-dehydroshikimate + H2O. Its pathway is metabolic intermediate biosynthesis; chorismate biosynthesis; chorismate from D-erythrose 4-phosphate and phosphoenolpyruvate: step 3/7. In terms of biological role, involved in the third step of the chorismate pathway, which leads to the biosynthesis of aromatic amino acids. Catalyzes the cis-dehydration of 3-dehydroquinate (DHQ) and introduces the first double bond of the aromatic ring to yield 3-dehydroshikimate. The protein is 3-dehydroquinate dehydratase of Lactiplantibacillus plantarum (strain ATCC BAA-793 / NCIMB 8826 / WCFS1) (Lactobacillus plantarum).